The sequence spans 239 residues: Tetratricopeptide repeat protein 9B (239 aa).

2 disordered regions span residues 1–57 (MQRG…LGAA) and 99–126 (QGAR…SEEQ). Phosphoserine occurs at positions 7 and 27. The segment covering 16–31 (PEPPPRPPPALSPPGS) has biased composition (pro residues). The TPR 1 repeat unit spans residues 65–99 (AVAFKAEGQRCYREKKFREAIGKYHRALLQLKAAQ). Residues 106 to 116 (LPAPAPGPTSS) show a composition bias toward pro residues. A TPR 2 repeat occupies 171 to 204 (FKATYRAGIAFYHLGDYARALRYLQEARSREPTD).

Belongs to the TTC9 family.

The polypeptide is Tetratricopeptide repeat protein 9B (TTC9B) (Homo sapiens (Human)).